The primary structure comprises 517 residues: Xyloglucan galactosyltransferase XLT2 (517 aa).

The disordered stretch occupies residues 1-31 (MLPVSNPSSPEHLLKKSRTPDSTTSIDRKNS). Residues 1-49 (MLPVSNPSSPEHLLKKSRTPDSTTSIDRKNSFNSLHSVGNRSSYIAASR) lie on the Cytoplasmic side of the membrane. The segment covering 20–31 (PDSTTSIDRKNS) has biased composition (polar residues). The chain crosses the membrane as a helical; Signal-anchor for type II membrane protein span at residues 50-70 (SHCTWLILSLLSLQLILFLTL). Over 71 to 517 (RSIPFPHRHI…KEQEKWYKWR (447 aa)) the chain is Lumenal. Asn250, Asn288, Asn377, and Asn449 each carry an N-linked (GlcNAc...) asparagine glycan.

It belongs to the glycosyltransferase 47 family. Interacts with CSLC4, FUT1, XXT2 and XXT5. In terms of tissue distribution, expressed in roots, hypocotyls, cotyledons, leaves, stems and flowers.

Its subcellular location is the golgi apparatus membrane. Its function is as follows. Functions in xyloglucan synthesis by adding side chains to the xylosylated glucan backbone. Involved in galactosylating hemicellulose xyloglucan (XyG) at the second position of the XXXG motif to form XLXG. Associates with other xyloglucan-synthesizing enzymes to form multiprotein complexes for xyloglucan synthesis in the Golgi. In Arabidopsis thaliana (Mouse-ear cress), this protein is Xyloglucan galactosyltransferase XLT2.